The primary structure comprises 1090 residues: Protein transport protein Sec24A (1090 aa).

2 disordered regions span residues 1 to 260 (MAQP…AHNT) and 272 to 325 (TPQL…TQTP). Positions 8 to 28 (AARGAAASLQAQNGAASASGS) are enriched in low complexity. 3 stretches are compositionally biased toward polar residues: residues 29–55 (PYTN…SQPP), 138–151 (WQYN…QTNH), and 162–184 (GNPN…QTSF). A compositionally biased stretch (pro residues) spans 194–236 (QNPPLPPTFQPGAPPGPPPAGGPPPSRGPAPQKTPPRAAPPPS). Polar residues-rich tracts occupy residues 237 to 258 (FNSA…TAAH), 274 to 286 (QLVN…SRSV), and 313 to 325 (SYPS…TQTP). Positions 428, 431, 449, and 452 each coordinate Zn(2+). The interval 428 to 452 (CRSCRTYINPFVNFLDQRRWKCNLC) is zinc finger-like. The Gelsolin-like repeat unit spans residues 963 to 1036 (PQPPILQLSV…PESARIAAFI (74 aa)).

Belongs to the SEC23/SEC24 family. SEC24 subfamily. COPII is composed of at least five proteins: the Sec23/24 complex, the Sec13/31 complex and Sar1. Interacts with TMED2. Interacts (as part of the Sec23/24 complex) with SEC22B; recruits SEC22B into COPII-coated vesicles for its transport from the endoplasmic reticulum to the Golgi. Interacts with STING1; promoting STING1 translocation to COPII vesicles in a STEEP1-dependent manner. Interacts with TMEM39A. Interacts with SACM1L; this interaction is reduced in the absence of TMEM39A. Interacts with kinase FAM20C; transport of FAM20C from the endoplasmic reticulum to the Golgi is likely to be mediated by COPII vesicles.

Its subcellular location is the cytoplasmic vesicle. It localises to the COPII-coated vesicle membrane. It is found in the endoplasmic reticulum membrane. The protein resides in the cytoplasm. The protein localises to the cytosol. Functionally, component of the coat protein complex II (COPII) which promotes the formation of transport vesicles from the endoplasmic reticulum (ER). The coat has two main functions, the physical deformation of the endoplasmic reticulum membrane into vesicles and the selection of cargo molecules for their transport to the Golgi complex. Plays a central role in cargo selection within the COPII complex and together with SEC24B may have a different specificity compared to SEC24C and SEC24D. May package preferentially cargos with cytoplasmic DxE or LxxLE motifs and may also recognize conformational epitopes. This is Protein transport protein Sec24A from Mus musculus (Mouse).